Reading from the N-terminus, the 201-residue chain is Cytochrome c4 (201 aa).

Positions 1 to 20 (MNKLLVSLLLTLGLTGLAHA) are cleaved as a signal peptide. Heme c contacts are provided by cysteine 34, cysteine 37, histidine 38, methionine 77, cysteine 130, cysteine 133, histidine 134, and methionine 178.

Binds 2 heme c groups covalently per subunit.

It localises to the periplasm. Functionally, diheme, high potential cytochrome c believed to be an intermediate electron donor to terminal oxidation systems. The protein is Cytochrome c4 (cc4) of Pseudomonas aeruginosa (strain ATCC 15692 / DSM 22644 / CIP 104116 / JCM 14847 / LMG 12228 / 1C / PRS 101 / PAO1).